Consider the following 454-residue polypeptide: tRNA modification GTPase MnmE (454 aa).

Positions 23, 80, and 120 each coordinate (6S)-5-formyl-5,6,7,8-tetrahydrofolate. A TrmE-type G domain is found at 216–377 (GMKVVIAGRP…LRNHLKQSMG (162 aa)). Asn-226 serves as a coordination point for K(+). Residues 226-231 (NAGKSS), 245-251 (TDIAGTT), 270-273 (DTAG), 335-338 (NKAD), and 358-360 (SAR) each bind GTP. Residue Ser-230 participates in Mg(2+) binding. Residues Thr-245, Ile-247, and Thr-250 each contribute to the K(+) site. Thr-251 is a binding site for Mg(2+). Lys-454 contributes to the (6S)-5-formyl-5,6,7,8-tetrahydrofolate binding site.

The protein belongs to the TRAFAC class TrmE-Era-EngA-EngB-Septin-like GTPase superfamily. TrmE GTPase family. As to quaternary structure, homodimer. Heterotetramer of two MnmE and two MnmG subunits. It depends on K(+) as a cofactor.

It localises to the cytoplasm. In terms of biological role, exhibits a very high intrinsic GTPase hydrolysis rate. Involved in the addition of a carboxymethylaminomethyl (cmnm) group at the wobble position (U34) of certain tRNAs, forming tRNA-cmnm(5)s(2)U34. This chain is tRNA modification GTPase MnmE, found in Yersinia enterocolitica serotype O:8 / biotype 1B (strain NCTC 13174 / 8081).